A 34-amino-acid chain; its full sequence is Photosystem II reaction center protein M (34 aa).

The helical transmembrane segment at 7–27 threads the bilayer; it reads GFVASLMFILVPAIFLIVLYI.

It belongs to the PsbM family. PSII is composed of 1 copy each of membrane proteins PsbA, PsbB, PsbC, PsbD, PsbE, PsbF, PsbH, PsbI, PsbJ, PsbK, PsbL, PsbM, PsbT, PsbX, PsbY, PsbZ, Psb30/Ycf12, peripheral proteins PsbO, CyanoQ (PsbQ), PsbU, PsbV and a large number of cofactors. It forms dimeric complexes.

It is found in the cellular thylakoid membrane. Functionally, one of the components of the core complex of photosystem II (PSII). PSII is a light-driven water:plastoquinone oxidoreductase that uses light energy to abstract electrons from H(2)O, generating O(2) and a proton gradient subsequently used for ATP formation. It consists of a core antenna complex that captures photons, and an electron transfer chain that converts photonic excitation into a charge separation. This subunit is found at the monomer-monomer interface. The sequence is that of Photosystem II reaction center protein M from Synechococcus sp. (strain CC9605).